We begin with the raw amino-acid sequence, 421 residues long: Synaptotagmin-12 (421 aa).

Residues 1–18 (MAVDVAEYHLSVIKSPPG) lie on the Vesicular side of the membrane. The helical transmembrane segment at 19 to 39 (WEVGVYAAGALALLGIAAVSL) threads the bilayer. Residues 40 to 421 (WKLWTSGSFP…VSMWHAVRRN (382 aa)) are Cytoplasmic-facing. 3 positions are modified to phosphoserine: serine 97, serine 99, and serine 214. C2 domains lie at 152–272 (TLGQ…SGWL) and 283–416 (AVGE…SMWH).

This sequence belongs to the synaptotagmin family. As to quaternary structure, homodimer. Can also form heterodimers. Interacts with SYT1. In terms of processing, phosphorylation of Ser-97 is required for mossy-fiber long-term potentiation.

It is found in the cytoplasmic vesicle. It localises to the secretory vesicle. The protein resides in the synaptic vesicle membrane. Its function is as follows. Synaptic vesicle phosphoprotein that enhances spontaneous neurotransmitter release but does not effect induced neurotransmitter release. Unlike other synaptotagmins, it does not bind Ca(2+) or phospholipids. Essential for mossy-fiber long-term potentiation in the hippocampus. This chain is Synaptotagmin-12 (SYT12), found in Homo sapiens (Human).